The chain runs to 449 residues: Phosphoglucosamine mutase (449 aa).

S105 (phosphoserine intermediate) is an active-site residue. 4 residues coordinate Mg(2+): S105, D242, D244, and D246. S105 is modified (phosphoserine).

Belongs to the phosphohexose mutase family. Requires Mg(2+) as cofactor. In terms of processing, activated by phosphorylation.

The enzyme catalyses alpha-D-glucosamine 1-phosphate = D-glucosamine 6-phosphate. In terms of biological role, catalyzes the conversion of glucosamine-6-phosphate to glucosamine-1-phosphate. The polypeptide is Phosphoglucosamine mutase (Clavibacter sepedonicus (Clavibacter michiganensis subsp. sepedonicus)).